Here is an 84-residue protein sequence, read N- to C-terminus: MAKASSTLVLSIIFLVMFALVEQNMGCTATMGPCEKDKSCSATCRATFGDRANGFCDYSTSTSPGGECTCVYHCPPVVPHESHL.

The N-terminal stretch at 1–23 (MAKASSTLVLSIIFLVMFALVEQ) is a signal peptide. Disulfide bonds link C27–C74, C34–C56, C40–C68, and C44–C70.

This sequence belongs to the DEFL family.

Its subcellular location is the secreted. This is Defensin-like protein 172 (LCR60) from Arabidopsis thaliana (Mouse-ear cress).